The primary structure comprises 165 residues: Pyruvoyl-dependent arginine decarboxylase (165 aa).

Residue S53 is modified to Pyruvic acid (Ser).

Belongs to the PdaD family. Pyruvate is required as a cofactor.

The enzyme catalyses L-arginine + H(+) = agmatine + CO2. The chain is Pyruvoyl-dependent arginine decarboxylase from Methanococcus aeolicus (strain ATCC BAA-1280 / DSM 17508 / OCM 812 / Nankai-3).